The chain runs to 965 residues: Valine--tRNA ligase (965 aa).

Residues 1–22 form a disordered region; it reads MENTPSHINKTEPSLDKTYSPQ. The 'HIGH' region signature appears at 56–66; that stretch reads PNVTGSLHMGH. The short motif at 568-572 is the 'KMSKS' region element; the sequence is KMSKS. K571 provides a ligand contact to ATP. Residues 896–965 are a coiled coil; it reads LIDKATELDR…IEQQATIAAL (70 aa).

It belongs to the class-I aminoacyl-tRNA synthetase family. ValS type 1 subfamily. In terms of assembly, monomer.

It localises to the cytoplasm. The catalysed reaction is tRNA(Val) + L-valine + ATP = L-valyl-tRNA(Val) + AMP + diphosphate. Functionally, catalyzes the attachment of valine to tRNA(Val). As ValRS can inadvertently accommodate and process structurally similar amino acids such as threonine, to avoid such errors, it has a 'posttransfer' editing activity that hydrolyzes mischarged Thr-tRNA(Val) in a tRNA-dependent manner. In Yersinia pseudotuberculosis serotype I (strain IP32953), this protein is Valine--tRNA ligase.